We begin with the raw amino-acid sequence, 264 residues long: Undecaprenyl-diphosphatase (264 aa).

7 helical membrane-spanning segments follow: residues 38 to 58, 75 to 95, 106 to 126, 136 to 156, 181 to 201, 217 to 237, and 242 to 262; these read RSDFFNIVIQAGAIVAVVLVF, REYVFKLGAAFLVTAVVGLVV, VSPVAWALIIGGVWMLLVEAY, VTWTVAIGVGLAQVVAGVFPG, FVFLVGIPTMFAASAYTFLEM, VAFLAAAITGFVVVKWLMGYI, and FTAFAIYRIALGAALLLWLPS.

This sequence belongs to the UppP family.

It is found in the cell membrane. The enzyme catalyses di-trans,octa-cis-undecaprenyl diphosphate + H2O = di-trans,octa-cis-undecaprenyl phosphate + phosphate + H(+). Catalyzes the dephosphorylation of undecaprenyl diphosphate (UPP). Confers resistance to bacitracin. This chain is Undecaprenyl-diphosphatase, found in Stenotrophomonas maltophilia (strain K279a).